A 126-amino-acid polypeptide reads, in one-letter code: Glycine cleavage system H protein (126 aa).

One can recognise a Lipoyl-binding domain in the interval lysine 22–glutamate 104. Position 63 is an N6-lipoyllysine (lysine 63).

Belongs to the GcvH family. In terms of assembly, the glycine cleavage system is composed of four proteins: P, T, L and H. The cofactor is (R)-lipoate.

Functionally, the glycine cleavage system catalyzes the degradation of glycine. The H protein shuttles the methylamine group of glycine from the P protein to the T protein. In terms of biological role, is also involved in protein lipoylation via its role as an octanoyl/lipoyl carrier protein intermediate. This chain is Glycine cleavage system H protein, found in Brevibacillus brevis (strain 47 / JCM 6285 / NBRC 100599).